We begin with the raw amino-acid sequence, 323 residues long: Olfactory receptor 2T35 (323 aa).

The Extracellular portion of the chain corresponds to 1–26; it reads MGMEGLLQNSTNFVLTGLITHPAFPG. Asparagine 9 is a glycosylation site (N-linked (GlcNAc...) asparagine). Residues 27-50 form a helical membrane-spanning segment; the sequence is LLFAVVFSIFVVAITANLVMILLI. Over 51-58 the chain is Cytoplasmic; that stretch reads HMDSRLHT. A helical transmembrane segment spans residues 59–80; sequence PMYFLLSQLSIMDTIYICITVP. Topologically, residues 81 to 101 are extracellular; it reads KMLQDLLSKDKTISFLGCAVQ. Cysteine 98 and cysteine 189 are joined by a disulfide. Residues 102-120 form a helical membrane-spanning segment; that stretch reads IFYLTLIGGEFFLLGLMAY. The Cytoplasmic segment spans residues 121–139; the sequence is DRYVAVCNPLRYPLLMNRR. Residues 140–158 form a helical membrane-spanning segment; that stretch reads VCLFMVVGSWVGGSLDGFM. Over 159–195 the chain is Extracellular; it reads LTPVTMSFPFCRSREINHFFCEIPAVLKLSCTDTSLY. Residues 196-219 traverse the membrane as a helical segment; sequence ETLMYACCVLMLLIPLSVISVSYT. Over 220-236 the chain is Cytoplasmic; it reads HILLTVHRMNSAEGRRK. The chain crosses the membrane as a helical span at residues 237-259; the sequence is AFATCSSHIMVVSVFYGAAFYTN. The Extracellular segment spans residues 260-272; the sequence is VLPHSYHTPEKDK. A helical transmembrane segment spans residues 273 to 292; sequence VVSAFYTILTPMLNPLIYSL. The Cytoplasmic portion of the chain corresponds to 293–323; that stretch reads RNKDVAAALRKVLGRCGSSQSIRVATVIRKG.

Belongs to the G-protein coupled receptor 1 family.

It localises to the cell membrane. Functionally, odorant receptor. The chain is Olfactory receptor 2T35 (OR2T35) from Homo sapiens (Human).